The chain runs to 261 residues: Kallikrein 1-related peptidase b5 (261 aa).

Positions 1-18 (MWFLILFLALSLGGIDAA) are cleaved as a signal peptide. The propeptide at 19–24 (PPVQSR) is activation peptide. The 234-residue stretch at 25 to 258 (IFGGFNCEKN…FNSWIKDTIA (234 aa)) folds into the Peptidase S1 domain. 5 cysteine pairs are disulfide-bonded: C31-C173, C50-C66, C152-C219, C184-C198, and C209-C234. H65 functions as the Charge relay system in the catalytic mechanism. N102 is a glycosylation site (N-linked (GlcNAc...) asparagine). The Charge relay system role is filled by D120. S213 acts as the Charge relay system in catalysis.

This sequence belongs to the peptidase S1 family. Kallikrein subfamily.

The enzyme catalyses Preferential cleavage of Arg-|-Xaa bonds in small molecule substrates. Highly selective action to release kallidin (lysyl-bradykinin) from kininogen involves hydrolysis of Met-|-Xaa or Leu-|-Xaa.. In terms of biological role, glandular kallikreins cleave Met-Lys and Arg-Ser bonds in kininogen to release Lys-bradykinin. The sequence is that of Kallikrein 1-related peptidase b5 (Klk1b5) from Mus musculus (Mouse).